The primary structure comprises 558 residues: MAKFVFVTGGVVSSIGKGIVAASLGRLLKSRGYSVSILKLDPYLNVDPGTMSPFQHGEVFVTEDGAETDLDLGHYERFTDTAMSRLNSVTTGSIYQAVINKERRGDYNGGTVQVIPHITGEIRERIHRVAANSGADVVITEIGGTVGDIESLPFLEAIREFRGDVGRNDLAYIHVTLLPFIGTSGELKTKPTQHSVKELRAIGIQPDVLVCRSDRPINEDLKRKIGGFCGVPNRAVIPALDADSIYAVPISLEEEGLCLEMLDVLNLTDHDSDMKNWVQLVHKLRNPGPAVKVALVGKYVQLNDAYLSVVEALRHACLTQDASLELSWVCAEQIETHGPENLLKGMDAVVVPGGFGNRGVDGKIAAIRWAREQRVPFLGLCLGMQCAVIEWARNQAGLTGASSAELEPDTSHPVIHLLPEQQDVVDLGGTMRLGVYPCRIAPDTLAQKLYGEEVVYERHRHRYEFNNSYRNLFIESGYTISGSSPDGRLVELIELKGHPFFTACQYHPEFLSRPGKPHPLFRGLIEAAQLRLPASPDEALRRQSQTNISAQEKPSRIG.

Residues 1–267 form an amidoligase domain region; it reads MAKFVFVTGG…CLEMLDVLNL (267 aa). Residue Ser-13 coordinates CTP. UTP is bound at residue Ser-13. Residues 14–19 and Asp-71 contribute to the ATP site; that span reads SIGKGI. Mg(2+) contacts are provided by Asp-71 and Glu-141. Residues 148–150, 188–193, and Lys-224 contribute to the CTP site; these read DIE and KTKPTQ. UTP is bound by residues 188 to 193 and Lys-224; that span reads KTKPTQ. The region spanning 292-534 is the Glutamine amidotransferase type-1 domain; the sequence is KVALVGKYVQ…IEAAQLRLPA (243 aa). Gly-354 is a binding site for L-glutamine. Residue Cys-381 is the Nucleophile; for glutamine hydrolysis of the active site. Residues 382 to 385, Glu-405, and Arg-462 each bind L-glutamine; that span reads LGMQ. Catalysis depends on residues His-507 and Glu-509. The segment at 536–558 is disordered; it reads PDEALRRQSQTNISAQEKPSRIG. Positions 542-552 are enriched in polar residues; it reads RQSQTNISAQE.

This sequence belongs to the CTP synthase family. In terms of assembly, homotetramer.

It catalyses the reaction UTP + L-glutamine + ATP + H2O = CTP + L-glutamate + ADP + phosphate + 2 H(+). The enzyme catalyses L-glutamine + H2O = L-glutamate + NH4(+). The catalysed reaction is UTP + NH4(+) + ATP = CTP + ADP + phosphate + 2 H(+). The protein operates within pyrimidine metabolism; CTP biosynthesis via de novo pathway; CTP from UDP: step 2/2. Its activity is regulated as follows. Allosterically activated by GTP, when glutamine is the substrate; GTP has no effect on the reaction when ammonia is the substrate. The allosteric effector GTP functions by stabilizing the protein conformation that binds the tetrahedral intermediate(s) formed during glutamine hydrolysis. Inhibited by the product CTP, via allosteric rather than competitive inhibition. In terms of biological role, catalyzes the ATP-dependent amination of UTP to CTP with either L-glutamine or ammonia as the source of nitrogen. Regulates intracellular CTP levels through interactions with the four ribonucleotide triphosphates. This Prochlorococcus marinus (strain MIT 9303) protein is CTP synthase.